Here is a 220-residue protein sequence, read N- to C-terminus: Urease accessory protein UreE (220 aa).

Residues 145-220 (EGGAYSAGGH…QIHKRRPDNL (76 aa)) form a disordered region. Positions 156–177 (HGHDHGSHEHSAHDHGKHDHAP) are enriched in basic and acidic residues. Positions 178 to 188 (AKPATAATPAA) are enriched in low complexity. Residues 191 to 206 (HGPDCNHGHDHAHEAK) are compositionally biased toward basic and acidic residues.

This sequence belongs to the UreE family.

It localises to the cytoplasm. Functionally, involved in urease metallocenter assembly. Binds nickel. Probably functions as a nickel donor during metallocenter assembly. This Polaromonas sp. (strain JS666 / ATCC BAA-500) protein is Urease accessory protein UreE.